The sequence spans 461 residues: METLFNGSLTVGGRDQESTGFAWWSGNARLINLSGKLLGAHVAHAGLIVFWAGAMNLFEVAHFVPEKPMYEQGLILLPHIASLGYGVGPGGEIIDTFPYFVSGVLHLISSAVLGFGGIYHALIGPETLEESFPFFGYIWKDKNKMTTILGIHLILLGFGAWLLVWKAMYFGGVYDTWAAGGGDVRIISNPTTNPGVIFGYLLKSPFGGDGWICSVDNMEDLIGGHIWIGTLEIFGGIWHILTKPWGWARRAFVWSGEAYLSYSLAAISAMGFIACCMSWFNNTAYPSEFYGPTGPEASQAQAFTFLVRDQRLGANVASAQGPTGLGKYLMRSPTGEIIFGGETMRFWDFRGPWLEPLRGPNGLDLNKLKNDIQPWQERRSAEYMTHAPLGSLNSVGGVATEINSINYVSPRSWLATSHFCLGFFFFVGHLWHAGRARAAAAGFEKGIDRDTEPVLSMKPID.

Residues 1–2 (ME) constitute a propeptide that is removed on maturation. At T3 the chain carries N-acetylthreonine. At T3 the chain carries Phosphothreonine. Transmembrane regions (helical) follow at residues 57-81 (LFEVAHFVPEKPMYEQGLILLPHIA), 122-143 (LIGPETLEESFPFFGYIWKDKN), 166-188 (KAMYFGGVYDTWAAGGGDVRIIS), 243-263 (KPWGWARRAFVWSGEAYLSYS), and 279-300 (WFNNTAYPSEFYGPTGPEASQA). E355 contributes to the [CaMn4O5] cluster binding site. A helical transmembrane segment spans residues 435-459 (RARAAAAGFEKGIDRDTEPVLSMKP).

Belongs to the PsbB/PsbC family. PsbC subfamily. As to quaternary structure, PSII is composed of 1 copy each of membrane proteins PsbA, PsbB, PsbC, PsbD, PsbE, PsbF, PsbH, PsbI, PsbJ, PsbK, PsbL, PsbM, PsbT, PsbX, PsbY, PsbZ, Psb30/Ycf12, at least 3 peripheral proteins of the oxygen-evolving complex and a large number of cofactors. It forms dimeric complexes. Binds multiple chlorophylls and provides some of the ligands for the Ca-4Mn-5O cluster of the oxygen-evolving complex. It may also provide a ligand for a Cl- that is required for oxygen evolution. PSII binds additional chlorophylls, carotenoids and specific lipids. is required as a cofactor.

The protein resides in the plastid. Its subcellular location is the chloroplast thylakoid membrane. In terms of biological role, one of the components of the core complex of photosystem II (PSII). It binds chlorophyll and helps catalyze the primary light-induced photochemical processes of PSII. PSII is a light-driven water:plastoquinone oxidoreductase, using light energy to abstract electrons from H(2)O, generating O(2) and a proton gradient subsequently used for ATP formation. The protein is Photosystem II CP43 reaction center protein of Oltmannsiellopsis viridis (Marine flagellate).